The sequence spans 601 residues: HMG domain-containing protein 4 (601 aa).

A Glycyl lysine isopeptide (Lys-Gly) (interchain with G-Cter in SUMO2) cross-link involves residue K8. 2 disordered regions span residues 51 to 410 (VRNS…KKKN) and 473 to 514 (TTVK…ASPA). Positions 82–93 (DYYYGDISSLES) are enriched in low complexity. S102 is modified (phosphoserine). A Glycyl lysine isopeptide (Lys-Gly) (interchain with G-Cter in SUMO2) cross-link involves residue K191. The residue at position 197 (S197) is a Phosphoserine. Polar residues-rich tracts occupy residues 212–221 (QYPSQQATVK) and 270–282 (DASQ…SANL). Positions 316–344 (IKKKKKSKKSKKKKDKEKHKEKRHSKSKR) are enriched in basic residues. Positions 394-404 (EEKDKERERGE) are enriched in basic and acidic residues. The HMG box DNA-binding region spans 407-475 (KKKNMSAYQV…KQNKAEATTV (69 aa)). Residues S497, S502, and S512 each carry the phosphoserine modification.

It localises to the nucleus. Negatively regulates Wnt/beta-catenin signaling during development. This Homo sapiens (Human) protein is HMG domain-containing protein 4 (HMGXB4).